Consider the following 551-residue polypeptide: Formate--tetrahydrofolate ligase (551 aa).

61–68 contacts ATP; that stretch reads TPAGEGKS.

It belongs to the formate--tetrahydrofolate ligase family.

It catalyses the reaction (6S)-5,6,7,8-tetrahydrofolate + formate + ATP = (6R)-10-formyltetrahydrofolate + ADP + phosphate. It participates in one-carbon metabolism; tetrahydrofolate interconversion. This is Formate--tetrahydrofolate ligase from Lactiplantibacillus plantarum (strain ATCC BAA-793 / NCIMB 8826 / WCFS1) (Lactobacillus plantarum).